The primary structure comprises 360 residues: Phosphoserine aminotransferase (360 aa).

Position 43 (arginine 43) interacts with L-glutamate. Pyridoxal 5'-phosphate is bound by residues 77-78, tryptophan 103, threonine 152, aspartate 172, and glutamine 195; that span reads AS. Lysine 196 carries the N6-(pyridoxal phosphate)lysine modification. 237–238 lines the pyridoxal 5'-phosphate pocket; sequence NT.

Belongs to the class-V pyridoxal-phosphate-dependent aminotransferase family. SerC subfamily. As to quaternary structure, homodimer. It depends on pyridoxal 5'-phosphate as a cofactor.

The protein localises to the cytoplasm. It carries out the reaction O-phospho-L-serine + 2-oxoglutarate = 3-phosphooxypyruvate + L-glutamate. It catalyses the reaction 4-(phosphooxy)-L-threonine + 2-oxoglutarate = (R)-3-hydroxy-2-oxo-4-phosphooxybutanoate + L-glutamate. It functions in the pathway amino-acid biosynthesis; L-serine biosynthesis; L-serine from 3-phospho-D-glycerate: step 2/3. Its pathway is cofactor biosynthesis; pyridoxine 5'-phosphate biosynthesis; pyridoxine 5'-phosphate from D-erythrose 4-phosphate: step 3/5. Functionally, catalyzes the reversible conversion of 3-phosphohydroxypyruvate to phosphoserine and of 3-hydroxy-2-oxo-4-phosphonooxybutanoate to phosphohydroxythreonine. The sequence is that of Phosphoserine aminotransferase from Syntrophobacter fumaroxidans (strain DSM 10017 / MPOB).